The primary structure comprises 591 residues: Serine/threonine-protein phosphatase PP2A 65 kDa regulatory subunit (591 aa).

Position 2 is an N-acetylalanine (alanine 2). 15 HEAT repeats span residues 10 to 48, 49 to 86, 87 to 125, 126 to 163, 164 to 202, 203 to 241, 242 to 280, 281 to 323, 324 to 362, 363 to 401, 402 to 440, 441 to 479, 480 to 518, 519 to 557, and 558 to 591; these read DSLYPIAVLIDELKNEDVQLRLNSIKKLSTIALALGEER, TRSELIPFLTETIYDEDEVLLALADQLGNFTSLVGGPE, FAMYLIPPLESLATVEETVVRDKAVESLRTVAAEHSAQD, LEIHVVPTLQRLVSGDWFTSRTSACGLFSVCYPRVTQP, VKAELRANFRKLCQDETPMVRRAAANKLGEFAKVVETEY, LKSDLIPNFVQLAQDDQDSVRLLAVEACVSIAQLLPQDD, VEHLVLPTLRQCASDSSWRVRYMVAEKFVDLQKAVGPEI, TRVD…QVQI, ILSSILPYVRDLVSDPNPHVKSALASVIMGLSPMLGAYQ, TVEQLLPLFLIQLKDECPEVRLNIISNLDCVNDVIGIQQ, LSQSLLPAIVELAEDSKWRVRLAIIEYMPALAGQLGQEF, FDQKLRGLCMGWLNDHVYAIREAATLNMKKLVEQFGAPW, AEQAIIPMILVMSRNKNYLHRMTCLFCLNVLAEVCGTDI, TTKLLLPTVLLLAADPVANVRFNVAKTLQKISPFLEASV, and IDAQVKPTLDKLNTDTDVDVKHFAAQAIAGIAAA.

This sequence belongs to the phosphatase 2A regulatory subunit A family. As to quaternary structure, PP2A exists in several trimeric forms, all of which consist of a core composed of a catalytic subunit associated with a 65 kDa regulatory subunit (PR65) (subunit A). The core complex associates with a third, variable subunit (subunit B), which confers distinct properties to the holoenzyme. Interacts with the inorganic phosphate transporter PXo (CG10483). Component of the Integrator-PP2A (INTAC) complex, composed of the Integrator core complex and protein phosphatase 2A subunits mts/PP2A and Pp2A-29B. In terms of tissue distribution, expression varies in tissues throughout development. Highly distributed expression in early embryos. In late embryonal development, found at high levels in nervous system and gonads. In third instar larvae, found in brain, imaginal disks and salivary glands.

It is found in the nucleus. In terms of biological role, the PR65 subunit of protein phosphatase 2A serves as a scaffolding molecule to coordinate the assembly of the catalytic subunit and a variable regulatory B subunit. Key mediator of a quality checkpoint during transcription elongation as part of the Integrator-PP2A (INTAC) complex. The INTAC complex drives premature transcription termination of transcripts that are unfavorably configured for transcriptional elongation: within the INTAC complex, acts as a scaffolding subunit for mts/PP2A, which catalyzes dephosphorylation of the C-terminal domain (CTD) of Pol II subunit POLR2A/RPB1 and Spt5, thereby preventing transcriptional elongation. This is Serine/threonine-protein phosphatase PP2A 65 kDa regulatory subunit (Pp2A-29B) from Drosophila melanogaster (Fruit fly).